The chain runs to 499 residues: Low-affinity inorganic phosphate transporter PitB (499 aa).

The next 10 helical transmembrane spans lie at 5-25 (FVGL…FVLF), 52-72 (LAVV…GLSV), 94-114 (LAMV…TWFF), 124-144 (LIGA…SSVM), 155-175 (IFSS…GLIF), 207-227 (PFWT…SHGA), 233-253 (GIGL…VVNM), 382-402 (APVW…MIGW), 430-450 (AAVS…THVL), and 473-493 (ILMA…GLYW).

It belongs to the inorganic phosphate transporter (PiT) (TC 2.A.20) family. Pit subfamily.

It localises to the cell inner membrane. It catalyses the reaction phosphate(in) + H(+)(in) = phosphate(out) + H(+)(out). Functionally, low-affinity inorganic phosphate transporter. The polypeptide is Low-affinity inorganic phosphate transporter PitB (Escherichia coli (strain K12)).